The sequence spans 329 residues: Bifunctional nuclease 2 (329 aa).

One can recognise a BFN domain in the interval 121–256; the sequence is CVHNNPQGGN…YLAYSDGMRV (136 aa). The region spanning 287 to 322 is the UVR domain; sequence DTKEFDLVRNMMQAVDEERYDEAAEWRDKLGKFQAK.

This sequence belongs to the bifunctional nuclease family.

It localises to the nucleus. Bifunctional nuclease with both RNase and DNase activities. Involved in basal defense response. Participates in abscisic acid-derived callose deposition following infection by a necrotrophic pathogen. The sequence is that of Bifunctional nuclease 2 (BBD2) from Arabidopsis thaliana (Mouse-ear cress).